The following is a 165-amino-acid chain: Protein C2-DOMAIN ABA-RELATED 7 (165 aa).

An N-acetylmethionine modification is found at Met-1. A C2 domain is found at 1–106; sequence MEELVGLLRI…HKMGLQELPD (106 aa). The Ca(2+) site is built by Arg-21, Asp-22, Asp-27, Asp-73, Lys-74, Asp-75, and Asp-81.

The protein belongs to the plant CAR protein family. Binds to PYR/PYL/RCAR abscisic acid intracellular receptors in an ABA-independent manner, both at the plasma membrane and in the nucleus.

It localises to the cell membrane. The protein localises to the nucleus. Stimulates the GTPase/ATPase activities of Obg-like ATPases. Mediates the transient calcium-dependent interaction of PYR/PYL/RCAR abscisic acid (ABA) receptors with the plasma membrane and thus regulates ABA sensitivity. The protein is Protein C2-DOMAIN ABA-RELATED 7 of Arabidopsis thaliana (Mouse-ear cress).